Reading from the N-terminus, the 407-residue chain is Na(+)-translocating NADH-quinone reductase subunit F (407 aa).

The chain crosses the membrane as a helical span at residues 3-23 (IILGVVMFTLIVLALTVMILF). Residues 32–126 (GDITIDINED…NLKIELPEEI (95 aa)) form the 2Fe-2S ferredoxin-type domain. The [2Fe-2S] cluster site is built by Cys-69, Cys-75, Cys-78, and Cys-110. The FAD-binding FR-type domain maps to 129–269 (VKKWECEVIS…SGPFGEFFAK (141 aa)).

This sequence belongs to the NqrF family. As to quaternary structure, composed of six subunits; NqrA, NqrB, NqrC, NqrD, NqrE and NqrF. Requires [2Fe-2S] cluster as cofactor. FAD is required as a cofactor.

It is found in the cell inner membrane. It carries out the reaction a ubiquinone + n Na(+)(in) + NADH + H(+) = a ubiquinol + n Na(+)(out) + NAD(+). NQR complex catalyzes the reduction of ubiquinone-1 to ubiquinol by two successive reactions, coupled with the transport of Na(+) ions from the cytoplasm to the periplasm. The first step is catalyzed by NqrF, which accepts electrons from NADH and reduces ubiquinone-1 to ubisemiquinone by a one-electron transfer pathway. In Yersinia enterocolitica serotype O:8 / biotype 1B (strain NCTC 13174 / 8081), this protein is Na(+)-translocating NADH-quinone reductase subunit F.